The sequence spans 694 residues: Elongation factor G (694 aa).

Residues 9 to 288 (SKIRNIGIMA…VIVKWLPSPK (280 aa)) enclose the tr-type G domain. GTP contacts are provided by residues 18–25 (AHIDAGKT), 82–86 (DTPGH), and 136–139 (NKMD).

This sequence belongs to the TRAFAC class translation factor GTPase superfamily. Classic translation factor GTPase family. EF-G/EF-2 subfamily.

It is found in the cytoplasm. Its function is as follows. Catalyzes the GTP-dependent ribosomal translocation step during translation elongation. During this step, the ribosome changes from the pre-translocational (PRE) to the post-translocational (POST) state as the newly formed A-site-bound peptidyl-tRNA and P-site-bound deacylated tRNA move to the P and E sites, respectively. Catalyzes the coordinated movement of the two tRNA molecules, the mRNA and conformational changes in the ribosome. The protein is Elongation factor G of Chlamydia felis (strain Fe/C-56) (Chlamydophila felis).